The sequence spans 133 residues: Small ribosomal subunit protein uS8 (133 aa).

Residues 1-28 are disordered; the sequence is MANHDPISDMLTRIRNASEKRHEKTKVP. A compositionally biased stretch (basic and acidic residues) spans 16–26; that stretch reads NASEKRHEKTK.

It belongs to the universal ribosomal protein uS8 family. As to quaternary structure, part of the 30S ribosomal subunit. Contacts proteins S5 and S12.

One of the primary rRNA binding proteins, it binds directly to 16S rRNA central domain where it helps coordinate assembly of the platform of the 30S subunit. The chain is Small ribosomal subunit protein uS8 from Prochlorococcus marinus (strain NATL1A).